A 333-amino-acid chain; its full sequence is Transcription initiation factor IIB (333 aa).

Residues 33–64 (EVYKCPICGNDKFVYNYERGEAVCIVCGAVVQ) form a TFIIB-type zinc finger. Residues Cys-37, Cys-40, Cys-56, and Cys-59 each contribute to the Zn(2+) site. Repeat copies occupy residues 149–232 (QELE…LREL) and 243–324 (LYIS…ELAK).

This sequence belongs to the TFIIB family.

Its function is as follows. Stabilizes TBP binding to an archaeal box-A promoter. Also responsible for recruiting RNA polymerase II to the pre-initiation complex (DNA-TBP-TFIIB). This is Transcription initiation factor IIB from Pyrobaculum aerophilum (strain ATCC 51768 / DSM 7523 / JCM 9630 / CIP 104966 / NBRC 100827 / IM2).